The primary structure comprises 161 residues: Arginine repressor (161 aa).

The protein belongs to the ArgR family.

The protein localises to the cytoplasm. It functions in the pathway amino-acid biosynthesis; L-arginine biosynthesis [regulation]. In terms of biological role, regulates arginine biosynthesis genes. This is Arginine repressor from Corynebacterium aurimucosum (strain ATCC 700975 / DSM 44827 / CIP 107346 / CN-1) (Corynebacterium nigricans).